We begin with the raw amino-acid sequence, 998 residues long: Mis18-binding protein 1 (998 aa).

Lys-7 participates in a covalent cross-link: Glycyl lysine isopeptide (Lys-Gly) (interchain with G-Cter in SUMO2). Phosphoserine occurs at positions 9, 109, and 134. Residues 122–153 (QRDKQEQLTRSSSMLGSPQGEHTKDFPPNTDK) are disordered. Over residues 142–153 (EHTKDFPPNTDK) the composition is skewed to basic and acidic residues. Phosphoserine is present on residues Ser-169 and Ser-258. One can recognise an SANTA domain in the interval 336–422 (VHLQEWMIKV…MFGFPHNWKE (87 aa)). Disordered regions lie at residues 438–460 (KTRQ…AEDK) and 476–502 (DNSL…KERR). The segment covering 488–497 (PLNSLEQPTS) has biased composition (polar residues). Thr-516 and Thr-578 each carry phosphothreonine. A phosphoserine mark is found at Ser-638 and Ser-639. Positions 638 to 660 (SSEENEVEIKSRTRARNTKERLN) are disordered. Positions 644–660 (VEIKSRTRARNTKERLN) are enriched in basic and acidic residues. Phosphothreonine is present on Thr-688. Residue Lys-707 forms a Glycyl lysine isopeptide (Lys-Gly) (interchain with G-Cter in SUMO2) linkage. Ser-726 carries the phosphoserine modification. The SANT domain maps to 741–796 (TDDEEWSEQELQKLHCAFTSLPKHKPGFWSDVAMAVGSRTADECQKKYTEEPQGQG). A Glycyl lysine isopeptide (Lys-Gly) (interchain with G-Cter in SUMO2) cross-link involves residue Lys-765. Residues 784–821 (CQKKYTEEPQGQGSRKHGSKKKQANKVQNGEKDSADAK) are disordered. Positions 797–807 (SRKHGSKKKQA) are enriched in basic residues. A compositionally biased stretch (basic and acidic residues) spans 812 to 821 (NGEKDSADAK). Glycyl lysine isopeptide (Lys-Gly) (interchain with G-Cter in SUMO2) cross-links involve residues Lys-821, Lys-828, and Lys-847. Residue Ser-872 is modified to Phosphoserine. A Glycyl lysine isopeptide (Lys-Gly) (interchain with G-Cter in SUMO2) cross-link involves residue Lys-948. Residues Ser-955 and Ser-985 each carry the phosphoserine modification. A disordered region spans residues 976-998 (SKYFIDDTESDEEEKDYYFSNSD). Residues 981-990 (DDTESDEEEK) are compositionally biased toward acidic residues.

In terms of assembly, interacts with SP1. Interacts with MIS18A. Identified in a complex containing MIS18A, OIP5/MIS18B, MIS18BP1, RBBP7 and RBBP4. Interacts with KAT7/HBO1. Interacts (via N-terminus) with FLNA (via N-terminus).

The protein resides in the nucleus. It localises to the chromosome. It is found in the centromere. In terms of biological role, required for recruitment of CENPA to centromeres and normal chromosome segregation during mitosis. In Mus musculus (Mouse), this protein is Mis18-binding protein 1 (Mis18bp1).